We begin with the raw amino-acid sequence, 410 residues long: MLKGEKVVLAYSGGLDTSVIIPWLKENYECEIIAACINVGQGEELKYIKDKALASGASKVYIEDVKEEFVKDYIFPTLKAGAVYEGKYLLGTSMARPLIAKKLVEIAHKEGAKAIAHGATGKGNDQVRFEVSIHALDPSIKIIAPWRIWDLKSREDEIDYAKKKGIPIPATYEKIYSVDNNLWHVSHEGGDLEDPWNEPKSDLYDIITPPDKAPDKPEYVLIEFEKGIPVKVNGKALEPVKLIEELNAIAGRNGVGIADLVENRLVGMKSRGVYETPAGTLLYAAHKELEYLVLDKETMRFKDLVSQKYADLVYNGLWFSPLKAALDAFVEETQKNVTGVVRLKLYKGNVINAGVKSPYSLYNQEFVTFGKDEVYNQKDAEGFINLFGLSLKIKALMEMERKDMDEAVGR.

A10 to S18 contributes to the ATP binding site. L-citrulline is bound by residues Y88 and S93. G118 lines the ATP pocket. 3 residues coordinate L-aspartate: T120, N124, and D125. An L-citrulline-binding site is contributed by N124. L-citrulline contacts are provided by R128, S177, S186, E262, and Y274.

Belongs to the argininosuccinate synthase family. Type 1 subfamily. Homotetramer.

The protein localises to the cytoplasm. It carries out the reaction L-citrulline + L-aspartate + ATP = 2-(N(omega)-L-arginino)succinate + AMP + diphosphate + H(+). It participates in amino-acid biosynthesis; L-arginine biosynthesis; L-arginine from L-ornithine and carbamoyl phosphate: step 2/3. This Thermoanaerobacter pseudethanolicus (strain ATCC 33223 / 39E) (Clostridium thermohydrosulfuricum) protein is Argininosuccinate synthase.